The sequence spans 181 residues: MRPMHGTTVLCVRREGRVVIAGDGQVTLDKTVMKATARKVRRLGEGQVVAGFAGATADAFQLFELFEKKLKEHARSLPRAAVELAKQWRTDRMLRRLEALLVVADREHVLVLSGAGDVIEPDPVANGAAVAIGSGGPYALAAARALLAHSSLDARRVAEEAMKLAAEICIYTNGNLTIEEL.

Residue Thr-7 is part of the active site. Positions 166, 169, and 172 each coordinate Na(+).

The protein belongs to the peptidase T1B family. HslV subfamily. As to quaternary structure, a double ring-shaped homohexamer of HslV is capped on each side by a ring-shaped HslU homohexamer. The assembly of the HslU/HslV complex is dependent on binding of ATP.

The protein localises to the cytoplasm. It catalyses the reaction ATP-dependent cleavage of peptide bonds with broad specificity.. Its activity is regulated as follows. Allosterically activated by HslU binding. Protease subunit of a proteasome-like degradation complex believed to be a general protein degrading machinery. This is ATP-dependent protease subunit HslV from Anaeromyxobacter dehalogenans (strain 2CP-C).